Here is a 473-residue protein sequence, read N- to C-terminus: Photosystem II CP43 reaction center protein (473 aa).

Positions 1–14 (MKILYSLRRFYHVE) are excised as a propeptide. Residue threonine 15 is modified to N-acetylthreonine. Threonine 15 is modified (phosphothreonine). 5 consecutive transmembrane segments (helical) span residues 69 to 93 (LFEV…PHLA), 134 to 155 (LLGP…QDRN), 178 to 200 (KALY…RKIT), 255 to 275 (KPFA…LSYS), and 291 to 312 (WFNN…ASQA). Residue glutamate 367 coordinates [CaMn4O5] cluster. The helical transmembrane segment at 447–471 (RARAAAAGFEKGIDRDLEPVVYMTP) threads the bilayer.

The protein belongs to the PsbB/PsbC family. PsbC subfamily. In terms of assembly, PSII is composed of 1 copy each of membrane proteins PsbA, PsbB, PsbC, PsbD, PsbE, PsbF, PsbH, PsbI, PsbJ, PsbK, PsbL, PsbM, PsbT, PsbX, PsbY, PsbZ, Psb30/Ycf12, at least 3 peripheral proteins of the oxygen-evolving complex and a large number of cofactors. It forms dimeric complexes. Requires Binds multiple chlorophylls and provides some of the ligands for the Ca-4Mn-5O cluster of the oxygen-evolving complex. It may also provide a ligand for a Cl- that is required for oxygen evolution. PSII binds additional chlorophylls, carotenoids and specific lipids. as cofactor. Phosphorylated in both bundle sheath and mesophyll cells, phosphorylation increases when cells are grown under high rather than low light regimes (70 vs 900 umol photons/m-2/s).

The protein resides in the plastid. Its subcellular location is the chloroplast thylakoid membrane. One of the components of the core complex of photosystem II (PSII). It binds chlorophyll and helps catalyze the primary light-induced photochemical processes of PSII. PSII is a light-driven water:plastoquinone oxidoreductase, using light energy to abstract electrons from H(2)O, generating O(2) and a proton gradient subsequently used for ATP formation. This Zea mays (Maize) protein is Photosystem II CP43 reaction center protein.